We begin with the raw amino-acid sequence, 740 residues long: Glycerol dehydrogenase large subunit (740 aa).

The signal sequence occupies residues 1–29 (MRRPYLLATAAGLALACSPLIAHAQFAPA). 2 disordered regions span residues 28-105 (PAGA…GDWV) and 442-468 (LPVE…PWSV). A compositionally biased stretch (low complexity) spans 34–43 (EPSSSVPGPG). Residues 46-58 (SEPTENSPKSQSY) are compositionally biased toward polar residues.

It belongs to the bacterial PQQ dehydrogenase family. Pyrroloquinoline quinone is required as a cofactor.

Its subcellular location is the secreted. It carries out the reaction glycerol + A = dihydroxyacetone + AH2. Functionally, catalyzes the oxidation of glycerol to glycerone. Also acts, more slowly, on a number of other polyols including D-sorbitol, D-arabinitol, D-mannitol, meso-erythritol, adonitol and propylene glycol. The protein is Glycerol dehydrogenase large subunit (sldA) of Gluconobacter thailandicus.